The primary structure comprises 347 residues: N-acetyl-gamma-glutamyl-phosphate reductase (347 aa).

Residue C150 is part of the active site.

Belongs to the NAGSA dehydrogenase family. Type 1 subfamily.

The protein localises to the cytoplasm. The enzyme catalyses N-acetyl-L-glutamate 5-semialdehyde + phosphate + NADP(+) = N-acetyl-L-glutamyl 5-phosphate + NADPH + H(+). Its pathway is amino-acid biosynthesis; L-arginine biosynthesis; N(2)-acetyl-L-ornithine from L-glutamate: step 3/4. Catalyzes the NADPH-dependent reduction of N-acetyl-5-glutamyl phosphate to yield N-acetyl-L-glutamate 5-semialdehyde. The protein is N-acetyl-gamma-glutamyl-phosphate reductase of Leifsonia xyli subsp. xyli (strain CTCB07).